Here is a 154-residue protein sequence, read N- to C-terminus: MNSSIEISSYRDQHFKGSRSEQEKLLKASSTLYMGNLSFYTTEEQIYELYSRCGDIRRVIMGLDKYKKTPCGFCFVEYYAREDAENCMRYINGTRLDDRIIRCDWDAGFIEGRQYGRGKTGGQVRDEYRTDYDGGRGGYGKIIAQKINPNTLER.

MRNA contacts are provided by residues Tyr10, Tyr33, 102–106, 113–117, and 123–124; these read RCDWD, RQYGR, and QV. One can recognise an RRM domain in the interval 30-108; the sequence is STLYMGNLSF…RIIRCDWDAG (79 aa).

Belongs to the RRM NCBP2 family. As to quaternary structure, component of the nuclear cap-binding complex (CBC), a heterodimer composed of Cbp80 and Cbp20 that interacts with m7GpppG-capped RNA.

The protein localises to the nucleus. Component of the cap-binding complex (CBC), which binds co-transcriptionally to the 5' cap of pre-mRNAs and is involved in various processes such as pre-mRNA splicing and RNA-mediated gene silencing (RNAi). The CBC complex is involved in miRNA-mediated RNA interference and is required for primary microRNAs (miRNAs) processing. Also involved in innate immunity via the short interfering RNAs (siRNAs) processing machinery by restricting the viral RNA production. In the CBC complex, Cbp20 recognizes and binds capped RNAs (m7GpppG-capped RNA) but requires Cbp80 to stabilize the movement of its N-terminal loop and lock the CBC into a high affinity cap-binding state with the cap structure. The sequence is that of Nuclear cap-binding protein subunit 2 from Bombyx mori (Silk moth).